Reading from the N-terminus, the 117-residue chain is Hydrogenase maturation factor HypA (117 aa).

Histidine 2 provides a ligand contact to Ni(2+). The Zn(2+) site is built by cysteine 73, cysteine 76, cysteine 92, and cysteine 95.

Belongs to the HypA/HybF family.

In terms of biological role, involved in the maturation of [NiFe] hydrogenases. Required for nickel insertion into the metal center of the hydrogenase. The polypeptide is Hydrogenase maturation factor HypA (Solidesulfovibrio magneticus (strain ATCC 700980 / DSM 13731 / RS-1) (Desulfovibrio magneticus)).